We begin with the raw amino-acid sequence, 170 residues long: Putative 4-hydroxy-4-methyl-2-oxoglutarate aldolase (170 aa).

Residues 81–84 (GDII) and R103 contribute to the substrate site. D104 contacts a divalent metal cation.

This sequence belongs to the class II aldolase/RraA-like family. In terms of assembly, homotrimer. It depends on a divalent metal cation as a cofactor.

The catalysed reaction is 4-hydroxy-4-methyl-2-oxoglutarate = 2 pyruvate. The enzyme catalyses oxaloacetate + H(+) = pyruvate + CO2. Catalyzes the aldol cleavage of 4-hydroxy-4-methyl-2-oxoglutarate (HMG) into 2 molecules of pyruvate. Also contains a secondary oxaloacetate (OAA) decarboxylase activity due to the common pyruvate enolate transition state formed following C-C bond cleavage in the retro-aldol and decarboxylation reactions. This chain is Putative 4-hydroxy-4-methyl-2-oxoglutarate aldolase, found in Corynebacterium efficiens (strain DSM 44549 / YS-314 / AJ 12310 / JCM 11189 / NBRC 100395).